The chain runs to 158 residues: Placenta growth factor (158 aa).

Positions 1-18 (MLVMKLFTCFLQVLAGLA) are cleaved as a signal peptide. Asn29 and Asn30 each carry an N-linked (GlcNAc...) asparagine glycan. Disulfide bonds link Cys48-Cys90, Cys79-Cys125, and Cys83-Cys127. Residue Asn97 is glycosylated (N-linked (GlcNAc...) asparagine). Residues 136–158 (AERRKTKGKRKRSRNSQTEEPHP) form a disordered region. Residues 137-149 (ERRKTKGKRKRSR) show a composition bias toward basic residues.

The protein belongs to the PDGF/VEGF growth factor family. In terms of assembly, antiparallel homodimer; disulfide-linked. Also found as heterodimer with VEGFA/VEGF.

It is found in the secreted. Its function is as follows. Growth factor active in angiogenesis and endothelial cell growth, stimulating their proliferation and migration. It binds to the receptor FLT1/VEGFR-1. Also promotes cell tumor growth. The polypeptide is Placenta growth factor (Pgf) (Mus musculus (Mouse)).